The primary structure comprises 828 residues: Glycerol-3-phosphate acyltransferase (828 aa).

The HXXXXD motif signature appears at 309-314; it reads CHRSHI.

This sequence belongs to the GPAT/DAPAT family.

It localises to the cell inner membrane. It catalyses the reaction sn-glycerol 3-phosphate + an acyl-CoA = a 1-acyl-sn-glycero-3-phosphate + CoA. It functions in the pathway phospholipid metabolism; CDP-diacylglycerol biosynthesis; CDP-diacylglycerol from sn-glycerol 3-phosphate: step 1/3. The chain is Glycerol-3-phosphate acyltransferase from Pseudomonas putida (strain W619).